Consider the following 458-residue polypeptide: Glutamyl-tRNA reductase (458 aa).

Substrate is bound by residues 49–52, Ser109, 114–116, and Gln120; these read TCNR and EQQ. Cys50 (nucleophile) is an active-site residue. Position 191 to 196 (191 to 196) interacts with NADP(+); that stretch reads GAGAMA.

This sequence belongs to the glutamyl-tRNA reductase family. As to quaternary structure, homodimer.

The enzyme catalyses (S)-4-amino-5-oxopentanoate + tRNA(Glu) + NADP(+) = L-glutamyl-tRNA(Glu) + NADPH + H(+). The protein operates within porphyrin-containing compound metabolism; protoporphyrin-IX biosynthesis; 5-aminolevulinate from L-glutamyl-tRNA(Glu): step 1/2. In terms of biological role, catalyzes the NADPH-dependent reduction of glutamyl-tRNA(Glu) to glutamate 1-semialdehyde (GSA). The protein is Glutamyl-tRNA reductase of Corynebacterium aurimucosum (strain ATCC 700975 / DSM 44827 / CIP 107346 / CN-1) (Corynebacterium nigricans).